The following is a 73-amino-acid chain: Putative antitoxin M1627_0365 (73 aa).

It belongs to the UPF0330 family.

In terms of biological role, possibly the antitoxin component of a type II toxin-antitoxin (TA) system. This Saccharolobus islandicus (strain M.16.27) (Sulfolobus islandicus) protein is Putative antitoxin M1627_0365.